We begin with the raw amino-acid sequence, 278 residues long: Urease accessory protein UreD (278 aa).

Belongs to the UreD family. As to quaternary structure, ureD, UreF and UreG form a complex that acts as a GTP-hydrolysis-dependent molecular chaperone, activating the urease apoprotein by helping to assemble the nickel containing metallocenter of UreC. The UreE protein probably delivers the nickel.

The protein resides in the cytoplasm. In terms of biological role, required for maturation of urease via the functional incorporation of the urease nickel metallocenter. This is Urease accessory protein UreD from Leptothrix cholodnii (strain ATCC 51168 / LMG 8142 / SP-6) (Leptothrix discophora (strain SP-6)).